Here is a 1350-residue protein sequence, read N- to C-terminus: ABC-type transporter MDR1 (1350 aa).

The span at 1–11 (MDTVHEGHHGS) shows a compositional bias: basic and acidic residues. The disordered stretch occupies residues 1–84 (MDTVHEGHHG…DEGEDPFAHL (84 aa)). A compositionally biased stretch (polar residues) spans 22–33 (VEVTNYEKTQLG). The segment covering 52-63 (KKHKSQKEKKHK) has biased composition (basic residues). In terms of domain architecture, ABC transmembrane type-1 1 spans 121–411 (VLSALSSIIG…VAPNIQAFTT (291 aa)). 6 helical membrane-spanning segments follow: residues 124 to 144 (ALSS…FGGL), 170 to 190 (LYFL…TAGF), 243 to 263 (KVGL…VSFI), 271 to 291 (ILMS…GFIV), 350 to 370 (GSMI…AFWM), and 380 to 400 (IEVG…FALG). The region spanning 446-691 (IELRNIRHIY…QGAYYNLVEA (246 aa)) is the ABC transporter 1 domain. Position 481-488 (481-488 (GESGSGKS)) interacts with ATP. Over residues 712–731 (KDQNLKHETTKGEQPEDGLK) the composition is skewed to basic and acidic residues. Residues 712-734 (KDQNLKHETTKGEQPEDGLKLAR) are disordered. 6 helical membrane passes run 779–799 (IGII…VFFA), 830–850 (FMLA…FAVC), 903–923 (LGTI…SLAI), 929–949 (LVCI…FWML), 1014–1034 (ASQS…GTLI), and 1044–1064 (FFLC…IFSF). The ABC transmembrane type-1 2 domain occupies 779–1070 (IGIICSVITG…IFSFAPDMGK (292 aa)). The region spanning 1105 to 1343 (IEFRDVHFRY…RGRYWELVNL (239 aa)) is the ABC transporter 2 domain. N-linked (GlcNAc...) asparagine glycosylation occurs at Asn-1127. Residue 1140–1147 (GASGCGKS) coordinates ATP.

This sequence belongs to the ABC transporter superfamily. ABCB family. Multidrug resistance exporter (TC 3.A.1.201) subfamily.

The protein resides in the cell membrane. Its function is as follows. ABC-type transporter that is involved in the secretion of liamocins, glycolipids (also called heavy oils) composed of a single mannitol or arabitol headgroup linked to either three, four or even six 3,5-dihydroxydecanoic ester tail-groups. The polypeptide is ABC-type transporter MDR1 (Aureobasidium melanogenum (Aureobasidium pullulans var. melanogenum)).